The following is a 1390-amino-acid chain: DNA-directed RNA polymerase subunit beta (1390 aa).

This sequence belongs to the RNA polymerase beta chain family. In terms of assembly, the RNAP catalytic core consists of 2 alpha, 1 beta, 1 beta' and 1 omega subunit. When a sigma factor is associated with the core the holoenzyme is formed, which can initiate transcription.

The enzyme catalyses RNA(n) + a ribonucleoside 5'-triphosphate = RNA(n+1) + diphosphate. Its function is as follows. DNA-dependent RNA polymerase catalyzes the transcription of DNA into RNA using the four ribonucleoside triphosphates as substrates. The sequence is that of DNA-directed RNA polymerase subunit beta from Gluconobacter oxydans (strain 621H) (Gluconobacter suboxydans).